The sequence spans 489 residues: ATP synthase subunit beta, chloroplastic (489 aa).

Residue 170–177 (GGAGVGKT) participates in ATP binding.

The protein belongs to the ATPase alpha/beta chains family. F-type ATPases have 2 components, CF(1) - the catalytic core - and CF(0) - the membrane proton channel. CF(1) has five subunits: alpha(3), beta(3), gamma(1), delta(1), epsilon(1). CF(0) has four main subunits: a(1), b(1), b'(1) and c(9-12).

It is found in the plastid. It localises to the chloroplast thylakoid membrane. It catalyses the reaction ATP + H2O + 4 H(+)(in) = ADP + phosphate + 5 H(+)(out). In terms of biological role, produces ATP from ADP in the presence of a proton gradient across the membrane. The catalytic sites are hosted primarily by the beta subunits. This chain is ATP synthase subunit beta, chloroplastic, found in Zygnema circumcarinatum (Green alga).